Consider the following 214-residue polypeptide: ATP-dependent Clp protease proteolytic subunit 3 (214 aa).

Ser-106 acts as the Nucleophile in catalysis. Residue His-131 is part of the active site.

Belongs to the peptidase S14 family. In terms of assembly, fourteen ClpP subunits assemble into 2 heptameric rings which stack back to back to give a disk-like structure with a central cavity, resembling the structure of eukaryotic proteasomes.

It localises to the cytoplasm. The enzyme catalyses Hydrolysis of proteins to small peptides in the presence of ATP and magnesium. alpha-casein is the usual test substrate. In the absence of ATP, only oligopeptides shorter than five residues are hydrolyzed (such as succinyl-Leu-Tyr-|-NHMec, and Leu-Tyr-Leu-|-Tyr-Trp, in which cleavage of the -Tyr-|-Leu- and -Tyr-|-Trp bonds also occurs).. Cleaves peptides in various proteins in a process that requires ATP hydrolysis. Has a chymotrypsin-like activity. Plays a major role in the degradation of misfolded proteins. This chain is ATP-dependent Clp protease proteolytic subunit 3, found in Trichormus variabilis (strain ATCC 29413 / PCC 7937) (Anabaena variabilis).